Reading from the N-terminus, the 52-residue chain is Venom peptide 4b (52 aa).

The first 23 residues, 1 to 23 (MRSAILLVIVAIVAILGFLGVNA), serve as a signal peptide directing secretion. AXPX repeat units follow at residues 23 to 26 (AEPL), 31 to 34 (AEPN), and 39 to 42 (AAPL). A propeptide spanning residues 24-41 (EPLPSPLAEPNPHAKAAP) is cleaved from the precursor. The tract at residues 30–52 (LAEPNPHAKAAPLSPAAMASLAG) is disordered. Low complexity predominate over residues 37-52 (AKAAPLSPAAMASLAG). Ala51 bears the Alanine amide mark.

In terms of tissue distribution, expressed by the venom gland.

It is found in the secreted. This Eumenes pomiformis (Potter wasp) protein is Venom peptide 4b.